The chain runs to 321 residues: Lipoyl synthase (321 aa).

C68, C73, C79, C94, C98, C101, and S308 together coordinate [4Fe-4S] cluster. Residues 80–297 (FNHGTATFMI…KAEAMAMGFT (218 aa)) enclose the Radical SAM core domain.

This sequence belongs to the radical SAM superfamily. Lipoyl synthase family. [4Fe-4S] cluster is required as a cofactor.

It is found in the cytoplasm. It carries out the reaction [[Fe-S] cluster scaffold protein carrying a second [4Fe-4S](2+) cluster] + N(6)-octanoyl-L-lysyl-[protein] + 2 oxidized [2Fe-2S]-[ferredoxin] + 2 S-adenosyl-L-methionine + 4 H(+) = [[Fe-S] cluster scaffold protein] + N(6)-[(R)-dihydrolipoyl]-L-lysyl-[protein] + 4 Fe(3+) + 2 hydrogen sulfide + 2 5'-deoxyadenosine + 2 L-methionine + 2 reduced [2Fe-2S]-[ferredoxin]. The protein operates within protein modification; protein lipoylation via endogenous pathway; protein N(6)-(lipoyl)lysine from octanoyl-[acyl-carrier-protein]: step 2/2. In terms of biological role, catalyzes the radical-mediated insertion of two sulfur atoms into the C-6 and C-8 positions of the octanoyl moiety bound to the lipoyl domains of lipoate-dependent enzymes, thereby converting the octanoylated domains into lipoylated derivatives. The polypeptide is Lipoyl synthase (Yersinia enterocolitica serotype O:8 / biotype 1B (strain NCTC 13174 / 8081)).